We begin with the raw amino-acid sequence, 200 residues long: Probable GTP-binding protein EngB (200 aa).

The EngB-type G domain occupies 25–199 (SGYEVAFAGR…ISVLDRWYEW (175 aa)). Residues 33 to 40 (GRSNAGKS), 60 to 64 (GRTQL), 78 to 81 (DLPG), 145 to 148 (TKAD), and 178 to 180 (FSS) each bind GTP. Residues Ser40 and Thr62 each coordinate Mg(2+).

The protein belongs to the TRAFAC class TrmE-Era-EngA-EngB-Septin-like GTPase superfamily. EngB GTPase family. Requires Mg(2+) as cofactor.

In terms of biological role, necessary for normal cell division and for the maintenance of normal septation. This is Probable GTP-binding protein EngB from Legionella pneumophila (strain Paris).